The sequence spans 1659 residues: Fatty acid synthase subunit alpha (1659 aa).

The tract at residues 114–139 (TQAQASGGAGTIAGAGSSTAPVTAPP) is disordered. The Carrier domain maps to 160–235 (AQAFEIVRTL…AALQKTFTGQ (76 aa)). S195 is modified (O-(pantetheine 4'-phosphoryl)serine). Residues 588–826 (GRSVLITGAG…LCLMFNTMCS (239 aa)) are ketoreductase (KR) domain. The 546-residue stretch at 1030-1575 (KQLLHEVLIQ…QKGAQTIVVH (546 aa)) folds into the Ketosynthase family 3 (KS3) domain. Residues C1217, H1458, and H1499 each act as for beta-ketoacyl synthase activity in the active site. The segment at 1631–1659 (ETLLDPTPPQTNVDDRVARSIVQQESAEP) is disordered.

Belongs to the thiolase-like superfamily. Fungal fatty acid synthetase subunit alpha family. In terms of assembly, [Alpha(6)beta(6)] hexamers of two multifunctional subunits (alpha and beta). In terms of processing, 4'-phosphopantetheine is transferred from CoA to a specific serine of the acyl carrier domain by the C-terminal PPT domain. This modification is essential for activity because fatty acids are bound in thioester linkage to the sulfhydryl of the prosthetic group.

It catalyses the reaction acetyl-CoA + n malonyl-CoA + 2n NADPH + 4n H(+) = a long-chain-acyl-CoA + n CoA + n CO2 + 2n NADP(+).. It carries out the reaction a fatty acyl-[ACP] + malonyl-[ACP] + H(+) = a 3-oxoacyl-[ACP] + holo-[ACP] + CO2. The catalysed reaction is a (3R)-hydroxyacyl-[ACP] + NADP(+) = a 3-oxoacyl-[ACP] + NADPH + H(+). It participates in secondary metabolite biosynthesis. Fatty acid synthase subunit alpha; part of the gene cluster that mediates the biosynthesis of aspercryptins, linear lipopeptides built from six amino acids including 2 highly unusual and nonproteogenic amino acids, 2-amino-octanoic acid (2aoa) and 2-amino-dodecanol (2adol). The core structure of aspercryptins is as follows: Ser/Ala-Thr-Ile/Val-2aoa-Asn-2adol. The first step of aspercryptin biosynthesis is the generation of the fatty acid precursors, octanoic and dodecanoic acids, by the FAS subunits atnF and atnM. The fatty acid precursors are likely transformed into the corresponding alpha-amino fatty acids in three steps. First, they are hydroxylated by the cytochrome P450 monooxygenase atnE, then oxidized to the corresponding alpha-keto acids by the NAD(P)-dependent oxidoreductase atnD, and finally converted to the alpha-amino fatty acids by the PLP-dependent aminotransferases atnH or atnJ. the alpha-amino fatty acids, 2-amino-octanoic and 2-amino-dodecanoic acids, are recognized, activated, and covalently tethered to the NRPS atnA by its fourth and sixth adenylation domains. The second module of atnA is the Thr module and contains an epimerase (E) domain responsible for the epimerization of Thr to D-allo-Thr. Additionally, despite atnA having only one epimerase domain, the first amino acid of aspercryptin A1 is D-Ser, suggesting that serine is either loaded directly as D-Ser on the first module or that the epimerase domain in the threonine module epimerizes both L-Ser and L-Thr. After condensation of the hexapeptide of aspercryptin, the C-terminal reductase (TE) domain might be involved in the reductive release and production of the aldehyde hexapeptide. Further reduction would generate aspercryptins. The variety of aspercryptins produced reflects the flexibility of the atnA NRPS, allowing incorporation of alanine instead of serine, valine for isoleucine, and a C10 fatty amino alcohol instead of the C12 version. AtnB seems to be involved in the selectivity for Ile versus Val by the third module. Moreover, type B, C and D aspercryptins have an additional N-terminal cichorine, acetyl and propionyl group respectively. The polypeptide is Fatty acid synthase subunit alpha (Emericella nidulans (strain FGSC A4 / ATCC 38163 / CBS 112.46 / NRRL 194 / M139) (Aspergillus nidulans)).